A 372-amino-acid polypeptide reads, in one-letter code: Testis-specific serine/threonine-protein kinase 5 (372 aa).

The region spanning 27-302 is the Protein kinase domain; that stretch reads LLSSKKIGSG…LQQVAAHCWM (276 aa). ATP contacts are provided by residues 33 to 41 and K72; that span reads IGSGAFSKV. D173 acts as the Proton acceptor in catalysis. The segment at 314-372 is disordered; it reads GAPREQDHSWSTVAPDNTEPDRDTRHARSKGSSSSSGRTSPRRPSLAQLCNTWKPAPEQ. The span at 343 to 358 shows a compositional bias: low complexity; sequence KGSSSSSGRTSPRRPS.

The protein belongs to the protein kinase superfamily. CAMK Ser/Thr protein kinase family. Mg(2+) is required as a cofactor. Post-translationally, autophosphorylated.

It catalyses the reaction L-seryl-[protein] + ATP = O-phospho-L-seryl-[protein] + ADP + H(+). The enzyme catalyses L-threonyl-[protein] + ATP = O-phospho-L-threonyl-[protein] + ADP + H(+). With respect to regulation, activated by phosphorylation on Thr-207, potentially by autophosphorylation. May be involved in a signaling pathway during male germ cell development or mature sperm function. The sequence is that of Testis-specific serine/threonine-protein kinase 5 from Mus musculus (Mouse).